We begin with the raw amino-acid sequence, 464 residues long: Cysteine--tRNA ligase (464 aa).

Cysteine 27 is a Zn(2+) binding site. The 'HIGH' region signature appears at 29 to 39 (PTVYNFFHIGN). Zn(2+) is bound by residues cysteine 207, histidine 232, and glutamate 236. Residues 264-268 (KMSKS) carry the 'KMSKS' region motif. Lysine 267 provides a ligand contact to ATP.

The protein belongs to the class-I aminoacyl-tRNA synthetase family. As to quaternary structure, monomer. The cofactor is Zn(2+).

The protein resides in the cytoplasm. It catalyses the reaction tRNA(Cys) + L-cysteine + ATP = L-cysteinyl-tRNA(Cys) + AMP + diphosphate. The chain is Cysteine--tRNA ligase from Clostridium acetobutylicum (strain ATCC 824 / DSM 792 / JCM 1419 / IAM 19013 / LMG 5710 / NBRC 13948 / NRRL B-527 / VKM B-1787 / 2291 / W).